The sequence spans 298 residues: Probable alpha-L-glutamate ligase (298 aa).

One can recognise an ATP-grasp domain in the interval 104-287 (MQLLSRHGIG…VAGKIIEFLE (184 aa)). ATP-binding positions include lysine 141, 178 to 179 (EY), aspartate 187, and 211 to 213 (RSN). Residues aspartate 248, glutamate 260, and asparagine 262 each coordinate Mg(2+). Positions 248, 260, and 262 each coordinate Mn(2+).

This sequence belongs to the RimK family. The cofactor is Mg(2+). Mn(2+) serves as cofactor.

This Aeromonas salmonicida (strain A449) protein is Probable alpha-L-glutamate ligase.